Consider the following 385-residue polypeptide: 3-dehydroquinate synthase (385 aa).

NAD(+)-binding positions include 122 to 126 (GVIGD), 146 to 147 (TT), lysine 159, and lysine 168. The Zn(2+) site is built by glutamate 201, histidine 264, and histidine 282.

The protein belongs to the sugar phosphate cyclases superfamily. Dehydroquinate synthase family. Co(2+) is required as a cofactor. The cofactor is Zn(2+). It depends on NAD(+) as a cofactor.

It localises to the cytoplasm. The catalysed reaction is 7-phospho-2-dehydro-3-deoxy-D-arabino-heptonate = 3-dehydroquinate + phosphate. The protein operates within metabolic intermediate biosynthesis; chorismate biosynthesis; chorismate from D-erythrose 4-phosphate and phosphoenolpyruvate: step 2/7. Catalyzes the conversion of 3-deoxy-D-arabino-heptulosonate 7-phosphate (DAHP) to dehydroquinate (DHQ). The protein is 3-dehydroquinate synthase of Rhodospirillum rubrum (strain ATCC 11170 / ATH 1.1.1 / DSM 467 / LMG 4362 / NCIMB 8255 / S1).